A 622-amino-acid polypeptide reads, in one-letter code: Low affinity potassium transport system protein Kup (622 aa).

The next 12 membrane-spanning stretches (helical) occupy residues 9-29, 46-66, 101-121, 137-157, 165-185, 213-233, 247-267, 276-296, 337-357, 363-383, 395-415, and 416-436; these read LSAVTLAAIGVVYGDIGTSPL, PDVVFGFLSLIFWMLILVVSV, ILVVLGLIGGSFFYGEVVITP, PALDPYIVPCSIAVLTLLFVI, VGKLFAPVMLVWFLTLALLGL, VSFFALGAVVLAITGVEALYA, WFTVVLPSLVLNYFGQGALLL, PFFLLAPDWALIPLLILATLA, IYIPVINWTLYLAVVLVIIGF, LAAAYGIAVTGTMVITSILFC, FLVVFLLMVLLIIDIPMFSAN, and VLKLFSGGWLPLSLGLVMFII.

It belongs to the HAK/KUP transporter (TC 2.A.72) family.

It is found in the cell inner membrane. The catalysed reaction is K(+)(in) + H(+)(in) = K(+)(out) + H(+)(out). In terms of biological role, responsible for the low-affinity transport of potassium into the cell. Likely operates as a K(+):H(+) symporter. The polypeptide is Low affinity potassium transport system protein Kup (Yersinia pestis bv. Antiqua (strain Antiqua)).